The primary structure comprises 644 residues: MQTVRMTTAQALVKFLNQQYVEFDGKQQKFVKGIFTIFGHGNVVGLGQALEEDAGELEVYQGRNEQGMANAAMAFAKQKHRKQIMACTSSVGPGSANMITSAATASANNIPVLLLPGDVFATRQPDPVLQQIEQTHDLSISTNDAFRAVSKYWDRINRPEQLMTAMIQAMRVLTNPADTGAVTICLPQDVQGEAWDFPSYFFQKRVHRIERRLPTKASLADAVEMIKRKKKPVMICGGGVRYAEAAEELKQFAETFHIPFGETQAGKSAIESSHPYNLGGIGVTGNVAANTIAKEADLVIGIGTRFTDFTTASKQLFQNEEVEFLNINISEFHANKLDALKVIADAKEALLALIDELQEIDYQSSYTVEIADAKDAWETELSRLHNIRFTCQDFTPEVEGHFDENLNEYVDALGTQLTQTAVIGQINTLLDEDAIIVGAAGSLPGDLQRMWASRKPNTYHMEYGYSCMGYEVAGALGAKLAEPSKEVYAMVGDGSYQMLHSELVTSLQENKKINVLLFDNSGFGCINNLQMGNGMGSFGTEFRYRNQETRKLDGAIMKIDFAASAAGYGVKTYHVTSLEQLQEALIDAKKQTVSTLIDIKVLPKTMTNGYESWWHVGVAEVSKNQSVQAAYESKVSNLQQARSY.

Glutamate 65 serves as a coordination point for thiamine diphosphate. Residues 442 to 522 (SLPGDLQRMW…INVLLFDNSG (81 aa)) form a thiamine pyrophosphate binding region. The Mg(2+) site is built by aspartate 493 and asparagine 520.

Belongs to the TPP enzyme family. Mg(2+) is required as a cofactor. The cofactor is thiamine diphosphate.

It catalyses the reaction 3D-3,5/4-trihydroxycyclohexane-1,2-dione + H2O = 5-deoxy-D-glucuronate + H(+). Its pathway is polyol metabolism; myo-inositol degradation into acetyl-CoA; acetyl-CoA from myo-inositol: step 3/7. In terms of biological role, involved in the cleavage of the C1-C2 bond of 3D-(3,5/4)-trihydroxycyclohexane-1,2-dione (THcHDO) to yield 5-deoxy-glucuronate (5DG). The chain is 3D-(3,5/4)-trihydroxycyclohexane-1,2-dione hydrolase from Bacillus cereus (strain AH820).